Reading from the N-terminus, the 154-residue chain is Myoglobin (154 aa).

The region spanning 2 to 148 is the Globin domain; sequence GLSDGEWQLV…FRNDIAAKYK (147 aa). Ser4 bears the Phosphoserine mark. His65 serves as a coordination point for nitrite. Position 65 (His65) interacts with O2. A Phosphothreonine modification is found at Thr68. His94 lines the heme b pocket.

In terms of assembly, monomer.

Its subcellular location is the cytoplasm. It localises to the sarcoplasm. The enzyme catalyses Fe(III)-heme b-[protein] + nitric oxide + H2O = Fe(II)-heme b-[protein] + nitrite + 2 H(+). It carries out the reaction H2O2 + AH2 = A + 2 H2O. Monomeric heme protein which primary function is to store oxygen and facilitate its diffusion within muscle tissues. Reversibly binds oxygen through a pentacoordinated heme iron and enables its timely and efficient release as needed during periods of heightened demand. Depending on the oxidative conditions of tissues and cells, and in addition to its ability to bind oxygen, it also has a nitrite reductase activity whereby it regulates the production of bioactive nitric oxide. Under stress conditions, like hypoxia and anoxia, it also protects cells against reactive oxygen species thanks to its pseudoperoxidase activity. The polypeptide is Myoglobin (Hystrix cristata (North African crested porcupine)).